The primary structure comprises 150 residues: Ribosomal RNA large subunit methyltransferase H (150 aa).

Residues Ala-100 and 118–123 each bind S-adenosyl-L-methionine; that span reads LSEMTF.

It belongs to the RNA methyltransferase RlmH family. As to quaternary structure, homodimer.

The protein resides in the cytoplasm. It catalyses the reaction pseudouridine(1915) in 23S rRNA + S-adenosyl-L-methionine = N(3)-methylpseudouridine(1915) in 23S rRNA + S-adenosyl-L-homocysteine + H(+). In terms of biological role, specifically methylates the pseudouridine at position 1915 (m3Psi1915) in 23S rRNA. The sequence is that of Ribosomal RNA large subunit methyltransferase H from Helicobacter pylori (strain HPAG1).